The following is an 89-amino-acid chain: Small ribosomal subunit protein uS15 (89 aa).

This sequence belongs to the universal ribosomal protein uS15 family. Part of the 30S ribosomal subunit. Forms a bridge to the 50S subunit in the 70S ribosome, contacting the 23S rRNA.

In terms of biological role, one of the primary rRNA binding proteins, it binds directly to 16S rRNA where it helps nucleate assembly of the platform of the 30S subunit by binding and bridging several RNA helices of the 16S rRNA. Forms an intersubunit bridge (bridge B4) with the 23S rRNA of the 50S subunit in the ribosome. The polypeptide is Small ribosomal subunit protein uS15 (Streptococcus equi subsp. zooepidemicus (strain H70)).